A 139-amino-acid polypeptide reads, in one-letter code: Large ribosomal subunit protein bL17 (139 aa).

The interval 117-139 is disordered; it reads DRDPEAKGQDSGPVEIKDESEEG.

It belongs to the bacterial ribosomal protein bL17 family. As to quaternary structure, part of the 50S ribosomal subunit. Contacts protein L32.

This Rhodospirillum centenum (strain ATCC 51521 / SW) protein is Large ribosomal subunit protein bL17.